The primary structure comprises 340 residues: Holliday junction branch migration complex subunit RuvB (340 aa).

Residues 1 to 182 are large ATPase domain (RuvB-L); the sequence is MSDIDPTVRA…FGIPTRLQFY (182 aa). ATP contacts are provided by residues Leu21, Arg22, Gly63, Lys66, Thr67, Thr68, 129 to 131, Arg172, Tyr182, and Arg219; that span reads EDF. Thr67 contributes to the Mg(2+) binding site. A small ATPAse domain (RuvB-S) region spans residues 183–253; it reads TEDELFIIVD…LADMALNRLG (71 aa). The interval 256-340 is head domain (RuvB-H); the sequence is HLGLDGADRR…PRAQTDLFEG (85 aa). Arg292, Arg311, and Arg316 together coordinate DNA.

Belongs to the RuvB family. In terms of assembly, homohexamer. Forms an RuvA(8)-RuvB(12)-Holliday junction (HJ) complex. HJ DNA is sandwiched between 2 RuvA tetramers; dsDNA enters through RuvA and exits via RuvB. An RuvB hexamer assembles on each DNA strand where it exits the tetramer. Each RuvB hexamer is contacted by two RuvA subunits (via domain III) on 2 adjacent RuvB subunits; this complex drives branch migration. In the full resolvosome a probable DNA-RuvA(4)-RuvB(12)-RuvC(2) complex forms which resolves the HJ.

Its subcellular location is the cytoplasm. The enzyme catalyses ATP + H2O = ADP + phosphate + H(+). The RuvA-RuvB-RuvC complex processes Holliday junction (HJ) DNA during genetic recombination and DNA repair, while the RuvA-RuvB complex plays an important role in the rescue of blocked DNA replication forks via replication fork reversal (RFR). RuvA specifically binds to HJ cruciform DNA, conferring on it an open structure. The RuvB hexamer acts as an ATP-dependent pump, pulling dsDNA into and through the RuvAB complex. RuvB forms 2 homohexamers on either side of HJ DNA bound by 1 or 2 RuvA tetramers; 4 subunits per hexamer contact DNA at a time. Coordinated motions by a converter formed by DNA-disengaged RuvB subunits stimulates ATP hydrolysis and nucleotide exchange. Immobilization of the converter enables RuvB to convert the ATP-contained energy into a lever motion, pulling 2 nucleotides of DNA out of the RuvA tetramer per ATP hydrolyzed, thus driving DNA branch migration. The RuvB motors rotate together with the DNA substrate, which together with the progressing nucleotide cycle form the mechanistic basis for DNA recombination by continuous HJ branch migration. Branch migration allows RuvC to scan DNA until it finds its consensus sequence, where it cleaves and resolves cruciform DNA. In Roseobacter denitrificans (strain ATCC 33942 / OCh 114) (Erythrobacter sp. (strain OCh 114)), this protein is Holliday junction branch migration complex subunit RuvB.